Consider the following 317-residue polypeptide: Acetyl-coenzyme A carboxylase carboxyl transferase subunit alpha (317 aa).

The 262-residue stretch at 32 to 293 (NLSEEIARLE…KRLLTSELQA (262 aa)) folds into the CoA carboxyltransferase C-terminal domain.

The protein belongs to the AccA family. In terms of assembly, acetyl-CoA carboxylase is a heterohexamer composed of biotin carboxyl carrier protein (AccB), biotin carboxylase (AccC) and two subunits each of ACCase subunit alpha (AccA) and ACCase subunit beta (AccD).

Its subcellular location is the cytoplasm. It carries out the reaction N(6)-carboxybiotinyl-L-lysyl-[protein] + acetyl-CoA = N(6)-biotinyl-L-lysyl-[protein] + malonyl-CoA. The protein operates within lipid metabolism; malonyl-CoA biosynthesis; malonyl-CoA from acetyl-CoA: step 1/1. Functionally, component of the acetyl coenzyme A carboxylase (ACC) complex. First, biotin carboxylase catalyzes the carboxylation of biotin on its carrier protein (BCCP) and then the CO(2) group is transferred by the carboxyltransferase to acetyl-CoA to form malonyl-CoA. The sequence is that of Acetyl-coenzyme A carboxylase carboxyl transferase subunit alpha from Legionella pneumophila (strain Paris).